The following is a 180-amino-acid chain: Adenine phosphoribosyltransferase (180 aa).

Residue alanine 2 is modified to N-acetylalanine. Residues serine 4, serine 15, and serine 30 each carry the phosphoserine modification. Tyrosine 60 bears the Phosphotyrosine mark. Serine 66 carries the phosphoserine modification. Lysine 114 carries the N6-acetyllysine modification. Threonine 135 carries the post-translational modification Phosphothreonine.

This sequence belongs to the purine/pyrimidine phosphoribosyltransferase family. In terms of assembly, homodimer.

It is found in the cytoplasm. The enzyme catalyses AMP + diphosphate = 5-phospho-alpha-D-ribose 1-diphosphate + adenine. The protein operates within purine metabolism; AMP biosynthesis via salvage pathway; AMP from adenine: step 1/1. Catalyzes a salvage reaction resulting in the formation of AMP, that is energically less costly than de novo synthesis. This is Adenine phosphoribosyltransferase from Homo sapiens (Human).